Consider the following 152-residue polypeptide: Male-specific protein scotti (152 aa).

It belongs to the male-specific scotti family.

In terms of biological role, post-meiotically transcribed gene that has a role in late spermiogenesis; required for actin cone progression during spermatid individualization. The chain is Male-specific protein scotti from Drosophila mojavensis (Fruit fly).